The following is a 320-amino-acid chain: Cytochrome f (320 aa).

An N-terminal signal peptide occupies residues 1–35; sequence MQTRNTFSWIREEITRSISVSLMIYIITWASISSA. Heme is bound by residues Tyr-36, Cys-56, Cys-59, and His-60. Residues 286 to 306 traverse the membrane as a helical segment; sequence VQGLLFFLGSVVLAQIFLVLK.

Belongs to the cytochrome f family. The 4 large subunits of the cytochrome b6-f complex are cytochrome b6, subunit IV (17 kDa polypeptide, petD), cytochrome f and the Rieske protein, while the 4 small subunits are PetG, PetL, PetM and PetN. The complex functions as a dimer. Heme serves as cofactor.

The protein resides in the plastid. It localises to the chloroplast thylakoid membrane. Its function is as follows. Component of the cytochrome b6-f complex, which mediates electron transfer between photosystem II (PSII) and photosystem I (PSI), cyclic electron flow around PSI, and state transitions. The polypeptide is Cytochrome f (Nasturtium officinale (Watercress)).